The following is a 139-amino-acid chain: Putative lipoprotein LpqV (139 aa).

The first 25 residues, 1–25 (MRPSRYAPLLCAMVLALAWLSAVAG), serve as a signal peptide directing secretion. The N-palmitoyl cysteine moiety is linked to residue Cys-26. Cys-26 is lipidated: S-diacylglycerol cysteine.

The protein resides in the cell membrane. This is Putative lipoprotein LpqV (lpqV) from Mycobacterium bovis (strain ATCC BAA-935 / AF2122/97).